The following is a 227-amino-acid chain: MYFAILGTMSRTCVRAYAVFAIAIMVLTVAWFAFSISQAIQRNTVGAQQRFAQVIRRIAPRVTSKRQLTDAEADFIQNLCKNDDLIMALNIFSNRVQLFSWTYDDLMFVAGGGSELVPRSSSLFIKIFSGRVPYQAKDECLLFTAALRVLTPANIFFRGCVVFLVMLTLTISSMVFLVIEYLSVRRFQCAQGDARPRPAGPQGTARSRTDEAQVSPGTPPECPVSVF.

Helical transmembrane passes span 13-35 (CVRA…FAFS) and 155-177 (IFFR…MVFL). Positions 192-227 (GDARPRPAGPQGTARSRTDEAQVSPGTPPECPVSVF) are disordered. The segment covering 217 to 227 (GTPPECPVSVF) has biased composition (pro residues).

It localises to the cell membrane. This is an uncharacterized protein from Treponema pallidum (strain Nichols).